The chain runs to 398 residues: Secreted aspartic protease 3 (398 aa).

Residues 1–18 form the signal peptide; it reads MFLKNIFIALAIALLADA. The propeptide at 19 to 58 is activation peptide; it reads TPTTFNNSPGFVALNFDVIKTHKNVTGPQGEINTNVNVKR. A glycan (N-linked (GlcNAc...) asparagine) is linked at Asn42. The region spanning 72–384 is the Peptidase A1 domain; that stretch reads YASDITVGSN…DLDDNEISLA (313 aa). Asp90 is an active-site residue. 90 to 92 is a pepstatin A binding site; sequence DTG. A compositionally biased stretch (polar residues) spans 103 to 112; the sequence is VSCQAGQGQD. Positions 103–139 are disordered; that stretch reads VSCQAGQGQDPNFCKNEGTYSPSSSSSSQNLNSPFSI. A disulfide bridge connects residues Cys105 and Cys116. The span at 123–138 shows a compositional bias: low complexity; sequence SPSSSSSSQNLNSPFS. 140–143 contacts pepstatin A; that stretch reads EYGD. Zn(2+) is bound by residues His188, Asp248, His254, and Asp270. The active site involves Asp274. Pepstatin A is bound at residue 274 to 278; it reads DSGTT. Cys312 and Cys350 are joined by a disulfide. N-linked (GlcNAc...) asparagine glycosylation is present at Asn313.

Belongs to the peptidase A1 family. As to quaternary structure, monomer.

Its subcellular location is the secreted. It catalyses the reaction Preferential cleavage at the carboxyl of hydrophobic amino acids, but fails to cleave 15-Leu-|-Tyr-16, 16-Tyr-|-Leu-17 and 24-Phe-|-Phe-25 of insulin B chain. Activates trypsinogen, and degrades keratin.. With respect to regulation, inhibited by pepstatin A analogs. Secreted aspartic peptidases (SAPs) are a group of ten acidic hydrolases considered as key virulence factors. These enzymes supply the fungus with nutrient amino acids as well as are able to degrade the selected host's proteins involved in the immune defense. Induces host inflammatory cytokine production in a proteolytic activity-independent way. Moreover, acts toward human hemoglobin though limited proteolysis to generate a variety of antimicrobial hemocidins, enabling to compete with the other microorganisms of the same physiological niche using the microbicidal peptides generated from the host protein. Its function is as follows. Plays a key role in defense against host by cleaving histatin-5 (Hst 5), a peptide from human saliva that carries out fungicidal activity. The cleavage rate decreases in an order of SAP2 &gt; SAP9 &gt; SAP3 &gt; SAP7 &gt; SAP4 &gt; SAP1 &gt; SAP8. The first cleavage occurs between residues 'Lys-17' and 'His-18' of Hst 5, giving DSHAKRHHGYKRKFHEK and HHSHRGY peptides. Simultaneously, the DSHAKRHHGYKRK peptide is also formed. Further fragmentation by SAP3 results in DSHAKRHHGY and KRKFHEK products. This Candida albicans (strain SC5314 / ATCC MYA-2876) (Yeast) protein is Secreted aspartic protease 3.